The primary structure comprises 144 residues: Large ribosomal subunit protein uL24 (144 aa).

The disordered stretch occupies residues 1–22 (MKFNKMVSSDRGKNRKRHFNAP). Positions 13-22 (KNRKRHFNAP) are enriched in basic residues.

The protein belongs to the universal ribosomal protein uL24 family.

The polypeptide is Large ribosomal subunit protein uL24 (RPL26) (Littorina littorea (Common periwinkle)).